Reading from the N-terminus, the 434-residue chain is Eukaryotic peptide chain release factor subunit 1-1 (434 aa).

Belongs to the eukaryotic release factor 1 family. As to quaternary structure, heterodimer of two subunits, one of which binds GTP.

It is found in the cytoplasm. Its function is as follows. Directs the termination of nascent peptide synthesis (translation) in response to the termination codons UAA, UAG and UGA. Modulates plant growth and development. In Brassica oleracea var. botrytis (Cauliflower), this protein is Eukaryotic peptide chain release factor subunit 1-1.